Here is a 391-residue protein sequence, read N- to C-terminus: Immediate-early protein 2 (391 aa).

It belongs to the herpesviridae US22 family.

Its subcellular location is the host cytoplasm. The protein resides in the host nucleus. Functionally, involved in the reactivation of latent MCMV in spleen cells. The sequence is that of Immediate-early protein 2 (IE2) from Murid herpesvirus 1 (strain Smith) (MuHV-1).